A 449-amino-acid chain; its full sequence is Sulfite exporter TauE/SafE family protein 5 (449 aa).

12 helical membrane-spanning segments follow: residues 1-21 (MKTLFVLFLLLLCVFAINANQ), 57-77 (AIIMAGVLCFLAALISSAGGI), 78-98 (GGGGLFIPIMTIVAGVDLKTA), 101-121 (FSAFMVTGGSIANVISNLFGG), 127-147 (YDLALLLEPCMLLGVSIGVIC), 150-170 (VLPEWLITVLFAVFLAWSSLK), 224-244 (IPWTKLGVLVIVWASFFVIYL), 259-279 (PCGVEYWILLSLQIPLALIFT), 315-335 (AMSFLAGLLGGIFGIGGGMLI), 353-373 (TSFMVFFSATMSAVQYLLLGM), 378-398 (TAYVFSFICFLASLLGLVLVQ), and 409-429 (IIVFSVGTVMSLSTVLMTSFG).

The protein belongs to the 4-toluene sulfonate uptake permease (TSUP) (TC 2.A.102) family.

It is found in the membrane. The sequence is that of Sulfite exporter TauE/SafE family protein 5 from Arabidopsis thaliana (Mouse-ear cress).